The following is a 280-amino-acid chain: Putative pyruvate, phosphate dikinase regulatory protein (280 aa).

158–165 serves as a coordination point for ADP; the sequence is GVSRTSKT.

The protein belongs to the pyruvate, phosphate/water dikinase regulatory protein family. PDRP subfamily.

It catalyses the reaction N(tele)-phospho-L-histidyl/L-threonyl-[pyruvate, phosphate dikinase] + ADP = N(tele)-phospho-L-histidyl/O-phospho-L-threonyl-[pyruvate, phosphate dikinase] + AMP + H(+). The catalysed reaction is N(tele)-phospho-L-histidyl/O-phospho-L-threonyl-[pyruvate, phosphate dikinase] + phosphate + H(+) = N(tele)-phospho-L-histidyl/L-threonyl-[pyruvate, phosphate dikinase] + diphosphate. Bifunctional serine/threonine kinase and phosphorylase involved in the regulation of the pyruvate, phosphate dikinase (PPDK) by catalyzing its phosphorylation/dephosphorylation. This chain is Putative pyruvate, phosphate dikinase regulatory protein, found in Lactobacillus gasseri (strain ATCC 33323 / DSM 20243 / BCRC 14619 / CIP 102991 / JCM 1131 / KCTC 3163 / NCIMB 11718 / NCTC 13722 / AM63).